The chain runs to 119 residues: Large ribosomal subunit protein bL20 (119 aa).

This sequence belongs to the bacterial ribosomal protein bL20 family.

In terms of biological role, binds directly to 23S ribosomal RNA and is necessary for the in vitro assembly process of the 50S ribosomal subunit. It is not involved in the protein synthesizing functions of that subunit. The sequence is that of Large ribosomal subunit protein bL20 from Chloroflexus aggregans (strain MD-66 / DSM 9485).